We begin with the raw amino-acid sequence, 386 residues long: Outer membrane protein assembly factor BamB (386 aa).

A signal peptide spans 1-25; that stretch reads MMRNSRPGRAWRGAVVLTGLLALSG. A lipid anchor (N-palmitoyl cysteine) is attached at Cys26. Cys26 carries the S-diacylglycerol cysteine lipid modification.

This sequence belongs to the BamB family. Part of the Bam complex.

It localises to the cell outer membrane. Its function is as follows. Part of the outer membrane protein assembly complex, which is involved in assembly and insertion of beta-barrel proteins into the outer membrane. In Bordetella pertussis (strain Tohama I / ATCC BAA-589 / NCTC 13251), this protein is Outer membrane protein assembly factor BamB.